We begin with the raw amino-acid sequence, 272 residues long: Indole-3-glycerol phosphate synthase (272 aa).

Belongs to the TrpC family.

It carries out the reaction 1-(2-carboxyphenylamino)-1-deoxy-D-ribulose 5-phosphate + H(+) = (1S,2R)-1-C-(indol-3-yl)glycerol 3-phosphate + CO2 + H2O. It participates in amino-acid biosynthesis; L-tryptophan biosynthesis; L-tryptophan from chorismate: step 4/5. This is Indole-3-glycerol phosphate synthase from Mycolicibacterium paratuberculosis (strain ATCC BAA-968 / K-10) (Mycobacterium paratuberculosis).